Here is a 388-residue protein sequence, read N- to C-terminus: Chorismate synthase (388 aa).

Residues R39 and R45 each coordinate NADP(+). Residues 130 to 132, 251 to 252, G296, 311 to 315, and R337 each bind FMN; these read RSS, NA, and KPIPT.

Belongs to the chorismate synthase family. Homotetramer. Requires FMNH2 as cofactor.

It carries out the reaction 5-O-(1-carboxyvinyl)-3-phosphoshikimate = chorismate + phosphate. It participates in metabolic intermediate biosynthesis; chorismate biosynthesis; chorismate from D-erythrose 4-phosphate and phosphoenolpyruvate: step 7/7. In terms of biological role, catalyzes the anti-1,4-elimination of the C-3 phosphate and the C-6 proR hydrogen from 5-enolpyruvylshikimate-3-phosphate (EPSP) to yield chorismate, which is the branch point compound that serves as the starting substrate for the three terminal pathways of aromatic amino acid biosynthesis. This reaction introduces a second double bond into the aromatic ring system. This Streptococcus pneumoniae (strain ATCC 700669 / Spain 23F-1) protein is Chorismate synthase.